A 188-amino-acid chain; its full sequence is F7-2 fimbrial protein (188 aa).

Residues 1–21 form the signal peptide; the sequence is MIKSVIAGAVAMAVVSFGAYA. Cys43 and Cys82 form a disulfide bridge.

Belongs to the fimbrial protein family.

It localises to the fimbrium. Its function is as follows. Fimbriae (also called pili), polar filaments radiating from the surface of the bacterium to a length of 0.5-1.5 micrometers and numbering 100-300 per cell, enable bacteria to colonize the epithelium of specific host organs. The polypeptide is F7-2 fimbrial protein (F7-2) (Escherichia coli O6:H1 (strain CFT073 / ATCC 700928 / UPEC)).